A 416-amino-acid chain; its full sequence is UDP-N-acetylmuramoylalanine--D-glutamate ligase (416 aa).

108-114 (GTVGKTT) contacts ATP.

It belongs to the MurCDEF family.

It localises to the cytoplasm. The enzyme catalyses UDP-N-acetyl-alpha-D-muramoyl-L-alanine + D-glutamate + ATP = UDP-N-acetyl-alpha-D-muramoyl-L-alanyl-D-glutamate + ADP + phosphate + H(+). The protein operates within cell wall biogenesis; peptidoglycan biosynthesis. In terms of biological role, cell wall formation. Catalyzes the addition of glutamate to the nucleotide precursor UDP-N-acetylmuramoyl-L-alanine (UMA). This is UDP-N-acetylmuramoylalanine--D-glutamate ligase from Chlamydia muridarum (strain MoPn / Nigg).